The primary structure comprises 347 residues: Putative ORC1-type DNA replication protein 1 (347 aa).

ATP-binding positions include 34–38, tyrosine 167, and arginine 179; that span reads TGKTV.

The protein belongs to the CDC6/cdc18 family.

Its function is as follows. Involved in regulation of DNA replication. Has no effect on MCM helicase activity, either stimulatory or inhibitory. Does not bind DNA. This chain is Putative ORC1-type DNA replication protein 1 (cdc6-1), found in Thermoplasma acidophilum (strain ATCC 25905 / DSM 1728 / JCM 9062 / NBRC 15155 / AMRC-C165).